A 396-amino-acid polypeptide reads, in one-letter code: Phosphoglycerate kinase (396 aa).

Residues 21–23 (DFN), Arg36, 59–62 (HLGR), Arg118, and Arg151 contribute to the substrate site. ATP is bound by residues Lys201, Gly292, Glu323, and 349-352 (GGDS).

This sequence belongs to the phosphoglycerate kinase family. In terms of assembly, monomer.

Its subcellular location is the cytoplasm. The catalysed reaction is (2R)-3-phosphoglycerate + ATP = (2R)-3-phospho-glyceroyl phosphate + ADP. The protein operates within carbohydrate degradation; glycolysis; pyruvate from D-glyceraldehyde 3-phosphate: step 2/5. This Leptospira borgpetersenii serovar Hardjo-bovis (strain L550) protein is Phosphoglycerate kinase.